The chain runs to 360 residues: NAD(P)H-quinone oxidoreductase subunit 1, chloroplastic (360 aa).

9 helical membrane-spanning segments follow: residues 27 to 47, 98 to 118, 129 to 149, 165 to 185, 203 to 223, 248 to 268, 269 to 289, 297 to 317, and 340 to 360; these read IWIF…VLVI, FSIG…VIPF, IGIF…LMSG, AAQS…ISLL, FWGW…ISSL, YSGI…LISS, LFVT…ISIL, IFGT…FLFI, and FLLP…LFSL.

The protein belongs to the complex I subunit 1 family. NDH is composed of at least 16 different subunits, 5 of which are encoded in the nucleus.

The protein localises to the plastid. It localises to the chloroplast thylakoid membrane. The enzyme catalyses a plastoquinone + NADH + (n+1) H(+)(in) = a plastoquinol + NAD(+) + n H(+)(out). It carries out the reaction a plastoquinone + NADPH + (n+1) H(+)(in) = a plastoquinol + NADP(+) + n H(+)(out). In terms of biological role, NDH shuttles electrons from NAD(P)H:plastoquinone, via FMN and iron-sulfur (Fe-S) centers, to quinones in the photosynthetic chain and possibly in a chloroplast respiratory chain. The immediate electron acceptor for the enzyme in this species is believed to be plastoquinone. Couples the redox reaction to proton translocation, and thus conserves the redox energy in a proton gradient. The protein is NAD(P)H-quinone oxidoreductase subunit 1, chloroplastic of Nasturtium officinale (Watercress).